We begin with the raw amino-acid sequence, 643 residues long: Threonine--tRNA ligase (643 aa).

The TGS domain occupies methionine 1–threonine 62. A catalytic region spans residues aspartate 239–proline 537. Residues cysteine 333, histidine 384, and histidine 514 each coordinate Zn(2+).

It belongs to the class-II aminoacyl-tRNA synthetase family. In terms of assembly, homodimer. It depends on Zn(2+) as a cofactor.

It is found in the cytoplasm. The catalysed reaction is tRNA(Thr) + L-threonine + ATP = L-threonyl-tRNA(Thr) + AMP + diphosphate + H(+). In terms of biological role, catalyzes the attachment of threonine to tRNA(Thr) in a two-step reaction: L-threonine is first activated by ATP to form Thr-AMP and then transferred to the acceptor end of tRNA(Thr). Also edits incorrectly charged L-seryl-tRNA(Thr). The sequence is that of Threonine--tRNA ligase from Lactobacillus gasseri (strain ATCC 33323 / DSM 20243 / BCRC 14619 / CIP 102991 / JCM 1131 / KCTC 3163 / NCIMB 11718 / NCTC 13722 / AM63).